A 643-amino-acid polypeptide reads, in one-letter code: Leukocyte immunoglobulin-like receptor subfamily B member 5 (643 aa).

Positions 1–23 are cleaved as a signal peptide; it reads MTLTLSVLICLGLNVGPRTCVQA. Topologically, residues 24 to 458 are extracellular; that stretch reads GTLPKPTLWA…PQSGLGRHLG (435 aa). 4 consecutive Ig-like C2-type domains span residues 27–116, 111–228, 224–313, and 337–418; these read PKPT…LELV, DPLE…SLLI, PSLL…DPLD, and GENV…LVVS. An intrachain disulfide couples cysteine 49 to cysteine 98. Asparagine 139 carries N-linked (GlcNAc...) asparagine glycosylation. Intrachain disulfides connect cysteine 144-cysteine 195 and cysteine 244-cysteine 295. 2 N-linked (GlcNAc...) asparagine glycosylation sites follow: asparagine 279 and asparagine 339. Cysteine 344 and cysteine 395 form a disulfide bridge. Positions 417–433 are enriched in low complexity; it reads VSGPSGDPSLSPTGSTP. The tract at residues 417-449 is disordered; that stretch reads VSGPSGDPSLSPTGSTPTPGPEDQPLTPTGLDP. The chain crosses the membrane as a helical span at residues 459–479; it reads VVTGVSVAFVLLLFLLLFLLL. Residues 480-643 are Cytoplasmic-facing; sequence RHRHQSKHRT…PSIYAPLAIH (164 aa). The interval 493–643 is disordered; that stretch reads FYRPAGAAGP…PSIYAPLAIH (151 aa). Serine 514 is subject to Phosphoserine. Basic and acidic residues-rich tracts occupy residues 531-549, 557-567, and 579-592; these read TQPKDGAEMDARQSPRDED, EVKHSRPRREM, and LDTKDTQAEEDRQM. The ITIM motif 1 signature appears at 605–610; that stretch reads VTYAQL. A compositionally biased stretch (basic and acidic residues) spans 615–631; the sequence is LRREATEPPPSQEREPP. An ITIM motif 2 motif is present at residues 635–640; it reads SIYAPL.

It is found in the membrane. Its function is as follows. May act as receptor for class I MHC antigens. This chain is Leukocyte immunoglobulin-like receptor subfamily B member 5 (LILRB5), found in Pan troglodytes (Chimpanzee).